A 361-amino-acid chain; its full sequence is sn-glycerol-3-phosphate import ATP-binding protein UgpC (361 aa).

Residues 4–235 form the ABC transporter domain; that stretch reads VTLRNVRKTY…PATTFVASFI (232 aa). 37 to 44 contacts ATP; it reads GPSGCGKS.

It belongs to the ABC transporter superfamily. sn-glycerol-3-phosphate importer (TC 3.A.1.1.3) family. The complex is composed of two ATP-binding proteins (UgpC), two transmembrane proteins (UgpA and UgpE) and a solute-binding protein (UgpB).

Its subcellular location is the cell inner membrane. The enzyme catalyses sn-glycerol 3-phosphate(out) + ATP + H2O = sn-glycerol 3-phosphate(in) + ADP + phosphate + H(+). Functionally, part of the ABC transporter complex UgpBAEC involved in sn-glycerol-3-phosphate (G3P) import. Responsible for energy coupling to the transport system. This is sn-glycerol-3-phosphate import ATP-binding protein UgpC from Rhodopseudomonas palustris (strain BisA53).